Here is a 120-residue protein sequence, read N- to C-terminus: Ribonuclease P protein component (120 aa).

Belongs to the RnpA family. In terms of assembly, consists of a catalytic RNA component (M1 or rnpB) and a protein subunit.

It catalyses the reaction Endonucleolytic cleavage of RNA, removing 5'-extranucleotides from tRNA precursor.. In terms of biological role, RNaseP catalyzes the removal of the 5'-leader sequence from pre-tRNA to produce the mature 5'-terminus. It can also cleave other RNA substrates such as 4.5S RNA. The protein component plays an auxiliary but essential role in vivo by binding to the 5'-leader sequence and broadening the substrate specificity of the ribozyme. The polypeptide is Ribonuclease P protein component (Dehalococcoides mccartyi (strain CBDB1)).